The primary structure comprises 402 residues: Serine/threonine transporter SstT (402 aa).

The next 8 membrane-spanning stretches (helical) occupy residues isoleucine 17 to isoleucine 37, phenylalanine 44 to leucine 64, isoleucine 78 to tyrosine 98, alanine 138 to methionine 158, isoleucine 179 to isoleucine 199, valine 212 to isoleucine 232, methionine 295 to isoleucine 315, and alanine 336 to isoleucine 356.

It belongs to the dicarboxylate/amino acid:cation symporter (DAACS) (TC 2.A.23) family.

The protein resides in the cell membrane. It catalyses the reaction L-serine(in) + Na(+)(in) = L-serine(out) + Na(+)(out). The catalysed reaction is L-threonine(in) + Na(+)(in) = L-threonine(out) + Na(+)(out). Its function is as follows. Involved in the import of serine and threonine into the cell, with the concomitant import of sodium (symport system). In Streptococcus thermophilus (strain CNRZ 1066), this protein is Serine/threonine transporter SstT.